A 283-amino-acid polypeptide reads, in one-letter code: Polyamine aminopropyltransferase (283 aa).

Residues Gly3–Lys236 enclose the PABS domain. Position 32 (Gln32) interacts with S-methyl-5'-thioadenosine. Residues His63 and Asp87 each contribute to the spermidine site. S-methyl-5'-thioadenosine-binding positions include Glu107 and Asp138 to Gly139. Residue Asp156 is the Proton acceptor of the active site. Residue Asp156–Asp159 coordinates spermidine. Pro163 contacts S-methyl-5'-thioadenosine.

Belongs to the spermidine/spermine synthase family. Homodimer or homotetramer.

Its subcellular location is the cytoplasm. It carries out the reaction S-adenosyl 3-(methylsulfanyl)propylamine + putrescine = S-methyl-5'-thioadenosine + spermidine + H(+). Its pathway is amine and polyamine biosynthesis; spermidine biosynthesis; spermidine from putrescine: step 1/1. Its function is as follows. Catalyzes the irreversible transfer of a propylamine group from the amino donor S-adenosylmethioninamine (decarboxy-AdoMet) to putrescine (1,4-diaminobutane) to yield spermidine. This Moorella thermoacetica (strain ATCC 39073 / JCM 9320) protein is Polyamine aminopropyltransferase.